The sequence spans 223 residues: GTP-binding nuclear protein Ran (223 aa).

One can recognise a Small GTPase Ran-type domain in the interval 8 to 172 (VVAEFKLVLV…LWILRKLTGD (165 aa)). 19–26 (DGGVGKTT) serves as a coordination point for GTP. The tract at residues 38–46 (KRYIATQGV) is switch-I. Residues Gly69, 123–126 (NKVD), and 151–153 (SAK) each bind GTP. The interval 69–85 (GQEKLGGLREGYYIGAD) is switch-II.

This sequence belongs to the small GTPase superfamily. Ran family. Monomer. Found in a nuclear export complex with RanGTP, exportin and pre-miRNA.

It is found in the nucleus. In terms of biological role, GTP-binding protein involved in nucleocytoplasmic transport. Required for the import of protein into the nucleus and also for RNA export. Involved in chromatin condensation and control of cell cycle. This is GTP-binding nuclear protein Ran from Tetrahymena pyriformis.